Here is a 70-residue protein sequence, read N- to C-terminus: Protein SlyX homolog (70 aa).

The protein belongs to the SlyX family.

This chain is Protein SlyX homolog, found in Shewanella putrefaciens (strain CN-32 / ATCC BAA-453).